The chain runs to 168 residues: NADH-quinone oxidoreductase subunit B (168 aa).

Positions 49, 50, 114, and 144 each coordinate [4Fe-4S] cluster.

This sequence belongs to the complex I 20 kDa subunit family. NDH-1 is composed of 14 different subunits. Subunits NuoB, C, D, E, F, and G constitute the peripheral sector of the complex. It depends on [4Fe-4S] cluster as a cofactor.

It is found in the cell membrane. The enzyme catalyses a quinone + NADH + 5 H(+)(in) = a quinol + NAD(+) + 4 H(+)(out). NDH-1 shuttles electrons from NADH, via FMN and iron-sulfur (Fe-S) centers, to quinones in the respiratory chain. Couples the redox reaction to proton translocation (for every two electrons transferred, four hydrogen ions are translocated across the cytoplasmic membrane), and thus conserves the redox energy in a proton gradient. The sequence is that of NADH-quinone oxidoreductase subunit B from Wolbachia pipientis wMel.